A 393-amino-acid chain; its full sequence is 2-nitroimidazole transporter (393 aa).

Residues 1–12 (MTCSTSLSGKNR) are Cytoplasmic-facing. The chain crosses the membrane as a helical span at residues 13-33 (IVLIAGILMIATTLRVTFTGA). Over 34-52 (APLLDTIRSAYSLTTAQTG) the chain is Periplasmic. The helical transmembrane segment at 53–73 (LLTTLPLLAFALISPLAAPVA) threads the bilayer. Over 74-80 (RRFGMER) the chain is Cytoplasmic. 2 consecutive transmembrane segments (helical) span residues 81–101 (SLFA…LPSP) and 102–122 (YLLF…NVLL). The Cytoplasmic portion of the chain corresponds to 123 to 140 (PGLIKRDFPHSVARLTGA). Residues 141-161 (YSLTMGAAAALGSAMVVPLAL) traverse the membrane as a helical segment. Residues 162 to 163 (NG) lie on the Periplasmic side of the membrane. The helical transmembrane segment at 164-184 (FGWQGALLMLMCFPLLALFLW) threads the bilayer. The Cytoplasmic segment spans residues 185 to 218 (LPQWRSQQHANLSTSRALHTRGIWRSPLAWQVTL). Residues 219-239 (FLGINSLVYYVIIGWLPAILI) traverse the membrane as a helical segment. The Periplasmic portion of the chain corresponds to 240–249 (SHGYSEAQAG). A helical transmembrane segment spans residues 250–270 (SLHGLLQLATAAPGLLIPLFL). Topologically, residues 271 to 278 (HHVKDQRG) are cytoplasmic. A helical transmembrane segment spans residues 279–299 (IAAFVALMCAVGAVGLCFMPA). The Periplasmic portion of the chain corresponds to 300–304 (HAITW). The helical transmembrane segment at 305-325 (TLLFGFGSGATMILGLTFIGL) threads the bilayer. The Cytoplasmic portion of the chain corresponds to 326-334 (RASSAHQAA). Residues 335-355 (ALSGMAQSVGYLLAACGPPLM) traverse the membrane as a helical segment. Over 356-366 (GKIHDANGNWS) the chain is Periplasmic. A helical membrane pass occupies residues 367–387 (VPLMGVAILSLLMAIFGLCAG). Residues 388-393 (RDKEIR) are Cytoplasmic-facing.

This sequence belongs to the major facilitator superfamily. Cyanate porter (TC 2.A.1.17) family.

Its subcellular location is the cell inner membrane. Functionally, involved in efflux of 2-nitroimidazole. In Escherichia coli (strain K12), this protein is 2-nitroimidazole transporter.